Consider the following 132-residue polypeptide: Large ribosomal subunit protein uL14 (132 aa).

It belongs to the universal ribosomal protein uL14 family. In terms of assembly, part of the 50S ribosomal subunit. Forms a cluster with proteins L3 and L24e, part of which may contact the 16S rRNA in 2 intersubunit bridges.

In terms of biological role, binds to 23S rRNA. Forms part of two intersubunit bridges in the 70S ribosome. The polypeptide is Large ribosomal subunit protein uL14 (Methanoregula boonei (strain DSM 21154 / JCM 14090 / 6A8)).